We begin with the raw amino-acid sequence, 414 residues long: Protein IQ-DOMAIN 8 (414 aa).

A Nuclear localization signal 1 motif is present at residues 14–21; sequence NKKNITDD. A disordered region spans residues 40–61; that stretch reads LISSSKGFKSRGGSYGTPSLGS. IQ domains lie at 92-120, 121-143, and 144-169; these read REWA…AVVR, IQAI…CMQA, and LVRV…EKPS. Residues 119–132 are calmodulin-binding; sequence VRIQAIFRGRQVRK. 3 disordered regions span residues 156-190, 218-244, and 262-329; these read NRGP…SPGS, HQPR…SCKS, and GRLM…SGSF. Basic and acidic residues predominate over residues 164–184; sequence ELEKPSDQQKDDPAKQAEKGW. Over residues 231–244 the composition is skewed to polar residues; sequence KQGSVKKNNGSCKS. Basic and acidic residues predominate over residues 274 to 289; it reads NARKSESSVSEHDTVQ. A compositionally biased stretch (low complexity) spans 307 to 328; it reads SSSATSSESSSTSQSPVPFSGS. The Nuclear localization signal 2 motif lies at 336–343; the sequence is YRKPSYMS. A disordered region spans residues 347–398; it reads SIKAKQRRSGSSSSCSKTPFEKKQSMSYNGDVNVRRSAGSDPLNNQWTDLYP.

This sequence belongs to the IQD family. In terms of assembly, binds to multiple calmodulin (CaM) in the presence of Ca(2+) and CaM-like proteins.

The protein localises to the nucleus. It localises to the cytoplasm. Its subcellular location is the cytoskeleton. It is found in the nucleus envelope. May be involved in cooperative interactions with calmodulins or calmodulin-like proteins. Recruits calmodulin proteins to microtubules, thus being a potential scaffold in cellular signaling and trafficking. May associate with nucleic acids and regulate gene expression at the transcriptional or post-transcriptional level. This Arabidopsis thaliana (Mouse-ear cress) protein is Protein IQ-DOMAIN 8.